A 381-amino-acid chain; its full sequence is MTVDDTGSGADGDGRVDPEPAPDSADPGEDPLALRLEGLILGAERRYTPFQAARSAGVSMELASRFWRAMGFADIGQAKALTEADVLALRRLAGLVEAGLLSEAMAVQVARSTGQTTARLAEWQIDSFLEGLTEPPEPGMTRTEVTYPIVELLLPELQEFLVYVWRRQLAASAGRVIQAGDDEEMVDRRLAVGFADLVGFTRLTRRMEEEELGELVEAFETTSADLVAARGGRLVKTLGDEVLYAADDAGTAAEIALLLVETMAHDETMPELRVGIAFGTVTTRMGDVFGTTVNLASRLTSIAPKDAVLVDTAFAEELIRTRDAPASEAAAAEEAAAAEKEGEEPPVYRFALQPMWQRPVRGLGVVEPWLLTRRDGGGGEA.

The tract at residues 1-30 (MTVDDTGSGADGDGRVDPEPAPDSADPGED) is disordered. A Guanylate cyclase domain is found at 191 to 300 (AVGFADLVGF…TTVNLASRLT (110 aa)). Aspartate 196 and aspartate 240 together coordinate Mg(2+).

This sequence belongs to the adenylyl cyclase class-3 family. The cofactor is Mg(2+).

The enzyme catalyses ATP = 3',5'-cyclic AMP + diphosphate. This Streptomyces coelicolor (strain ATCC BAA-471 / A3(2) / M145) protein is Adenylate cyclase (cya).